Reading from the N-terminus, the 164-residue chain is Ribonuclease P protein component 2 (164 aa).

The protein belongs to the eukaryotic/archaeal RNase P protein component 2 family. As to quaternary structure, consists of a catalytic RNA component and at least 4-5 protein subunits.

The protein localises to the cytoplasm. It catalyses the reaction Endonucleolytic cleavage of RNA, removing 5'-extranucleotides from tRNA precursor.. In terms of biological role, part of ribonuclease P, a protein complex that generates mature tRNA molecules by cleaving their 5'-ends. The chain is Ribonuclease P protein component 2 from Halobacterium salinarum (strain ATCC 29341 / DSM 671 / R1).